The following is a 429-amino-acid chain: Serine hydroxymethyltransferase (429 aa).

(6S)-5,6,7,8-tetrahydrofolate is bound at residue 120–122; the sequence is GHI. K226 is modified (N6-(pyridoxal phosphate)lysine).

It belongs to the SHMT family. In terms of assembly, homodimer. It depends on pyridoxal 5'-phosphate as a cofactor.

The protein localises to the cytoplasm. It participates in amino-acid biosynthesis; glycine biosynthesis; glycine from L-serine: step 1/1. In terms of biological role, catalyzes the reversible interconversion of serine and glycine with a modified folate serving as the one-carbon carrier. Also exhibits a pteridine-independent aldolase activity toward beta-hydroxyamino acids, producing glycine and aldehydes, via a retro-aldol mechanism. The polypeptide is Serine hydroxymethyltransferase (Pyrobaculum arsenaticum (strain DSM 13514 / JCM 11321 / PZ6)).